A 395-amino-acid polypeptide reads, in one-letter code: Protein phosphatase PP2A regulatory subunit A (395 aa).

HEAT repeat units lie at residues Asp-44–Pro-81, Ser-83–Pro-120, Leu-122–Lys-159, Ala-161–Ile-198, Leu-200–Val-237, Phe-239–Gly-276, Trp-279–Ser-316, and Ile-318–Glu-355.

Belongs to the phosphatase 2A regulatory subunit A family. As to quaternary structure, PP2A exists in several trimeric forms, all of which consist of a core composed of a catalytic subunit associated with a 65 kDa regulatory subunit (PR65) (subunit A). The core complex associates with a third, variable subunit (subunit B), which confers distinct properties to the holoenzyme.

Functionally, the PR65 subunit of protein phosphatase 2A serves as a scaffolding molecule to coordinate the assembly of the catalytic subunit and a variable regulatory B subunit. The sequence is that of Protein phosphatase PP2A regulatory subunit A from Pisum sativum (Garden pea).